We begin with the raw amino-acid sequence, 502 residues long: uncharacterized protein (502 aa).

A helical transmembrane segment spans residues 1 to 21 (MKIFLVILSVFFFNGCFGLAY). PLD phosphodiesterase domains are found at residues 162–189 (IKKRMHNKLFIVDNFAVIIGGRNIGDNY) and 396–423 (TKHSLHGKTIVFDDALTLLGSFNIDPRS).

Belongs to the phospholipase D family. Cardiolipin synthase subfamily.

The protein localises to the cell membrane. This is an uncharacterized protein from Helicobacter pylori (strain J99 / ATCC 700824) (Campylobacter pylori J99).